The primary structure comprises 279 residues: Aldo-keto reductase Mvan_2161 (279 aa).

The Proton donor role is filled by Y54. 9 residues coordinate NADPH: L194, V196, I232, R234, S235, R240, S243, N244, and R270.

This sequence belongs to the aldo/keto reductase family.

The sequence is that of Aldo-keto reductase Mvan_2161 from Mycolicibacterium vanbaalenii (strain DSM 7251 / JCM 13017 / BCRC 16820 / KCTC 9966 / NRRL B-24157 / PYR-1) (Mycobacterium vanbaalenii).